We begin with the raw amino-acid sequence, 725 residues long: Beta-adducin (725 aa).

Residues 1–22 (MSEDTVPEAASPPPSQGQHYFD) form a disordered region. Phosphoserine occurs at positions 11 and 25. The residue at position 55 (Thr55) is a Phosphothreonine. A phosphoserine mark is found at Ser60 and Ser344. The tract at residues 425–444 (KQQKEKTRWLNTPNTYLRVN) is interaction with calmodulin. Residues 525–725 (AEKSRSPSTE…KSKKKEKVES (201 aa)) are disordered. Ser530 and Ser532 each carry phosphoserine. Position 533 is a phosphothreonine (Thr533). Residue Ser535 is modified to Phosphoserine. At Thr561 the chain carries Phosphothreonine. The span at 566-589 (EEYKKEVERKKLEQEQEGEKDIAT) shows a compositional bias: basic and acidic residues. Phosphoserine is present on residues Ser594, Ser598, Ser602, and Ser606. Polar residues predominate over residues 596–621 (VKSTPASPVQSPSKAGTKSPAVSPSK). Phosphothreonine is present on Thr612. Ser614, Ser618, and Ser620 each carry phosphoserine. A compositionally biased stretch (basic and acidic residues) spans 622–631 (TSEDTKKTEV). Thr674 carries the phosphothreonine modification. Phosphoserine is present on residues Ser678, Ser685, Ser688, Ser692, Ser696, Ser698, Ser700, Ser702, and Ser712. Residues 687–700 (TSGPLSPEGSPSKS) are compositionally biased toward low complexity. The span at 701-725 (PSKKKKKFRTPSFLKKSKKKEKVES) shows a compositional bias: basic residues. Residues 703–720 (KKKKKFRTPSFLKKSKKK) form an interaction with calmodulin region.

This sequence belongs to the aldolase class II family. Adducin subfamily. As to quaternary structure, found in a complex with ADD2, DMTN and SLC2A1. Interacts with SLC2A1. Heterodimer of an alpha and a beta subunit.

It localises to the cytoplasm. It is found in the cytoskeleton. Its subcellular location is the cell membrane. Membrane-cytoskeleton-associated protein that promotes the assembly of the spectrin-actin network. Binds to the erythrocyte membrane receptor SLC2A1/GLUT1 and may therefore provide a link between the spectrin cytoskeleton to the plasma membrane. Binds to calmodulin. Calmodulin binds preferentially to the beta subunit. The polypeptide is Beta-adducin (Add2) (Mus musculus (Mouse)).